Consider the following 127-residue polypeptide: Fluoride-specific ion channel FluC (127 aa).

The next 4 helical transmembrane spans lie at 4 to 24 (LLLA…LLSM), 35 to 55 (LGTL…FAWF), 71 to 91 (TGFC…VFLL), and 103 to 123 (VFVN…LFSA). The Na(+) site is built by glycine 75 and threonine 78.

Belongs to the fluoride channel Fluc/FEX (TC 1.A.43) family.

Its subcellular location is the cell inner membrane. The catalysed reaction is fluoride(in) = fluoride(out). Na(+) is not transported, but it plays an essential structural role and its presence is essential for fluoride channel function. Fluoride-specific ion channel. Important for reducing fluoride concentration in the cell, thus reducing its toxicity. In Escherichia coli O81 (strain ED1a), this protein is Fluoride-specific ion channel FluC.